We begin with the raw amino-acid sequence, 1194 residues long: Immunoglobulin superfamily member 3 (1194 aa).

The signal sequence occupies residues 1 to 19 (MKCFFPVLSCLAVLGVVSA). Ig-like C2-type domains follow at residues 20–138 (QRQV…AKMN), 143–262 (PDSL…WYAM), 276–386 (PTDK…KTVT), 401–539 (PIVV…VSIT), 545–661 (FAVT…WTRL), 676–803 (PVTK…EEVS), 813–945 (PDSR…TAVT), and 949–1097 (PDAA…YRLT). At 20–1124 (QRQVTVQEGP…LQSLICSNDA (1105 aa)) the chain is on the extracellular side. Intrachain disulfides connect Cys-42–Cys-120 and Cys-167–Cys-246. An N-linked (GlcNAc...) asparagine glycan is attached at Asn-43. The short motif at 250 to 252 (EWI) is the EWI motif element. Cys-302 and Cys-376 are disulfide-bonded. N-linked (GlcNAc...) asparagine glycosylation occurs at Asn-418. Intrachain disulfides connect Cys-432-Cys-511, Cys-566-Cys-645, Cys-701-Cys-782, Cys-838-Cys-918, and Cys-974-Cys-1080. Asn-842 is a glycosylation site (N-linked (GlcNAc...) asparagine). The tract at residues 997–1030 (GGGKRGSLGIDEQEEEEEEEDISQEEDSEDPTER) is disordered. A compositionally biased stretch (acidic residues) spans 1007-1026 (DEQEEEEEEEDISQEEDSED). Residue Asn-1077 is glycosylated (N-linked (GlcNAc...) asparagine). Residues 1125–1145 (LFYFVFFYPFPIFGILIITIL) form a helical membrane-spanning segment. Residues 1146–1194 (LVRFKSRNSSKNSEGKNGVPLLWIKEPHLNYSPTCLEPPVLSIHPGAID) lie on the Cytoplasmic side of the membrane.

Expressed in the lacrimal duct and lacrimal gland.

The protein localises to the membrane. The sequence is that of Immunoglobulin superfamily member 3 (Igsf3) from Mus musculus (Mouse).